We begin with the raw amino-acid sequence, 159 residues long: MNKSCIYPGTFDPITNGHMDVIKRACRVFDNVIVAVALNESKTPYFCYEERISLAKTATKDIPKVSVIGFDNLLVDLAKSKGINTVVRGLRAVSDFEYELQIGYANASLWSEFETVYFMPSLKNAFISSSIVRSVLKHGGDIGSLVPTNVLEEIKGKLC.

Threonine 10 contributes to the substrate binding site. Residues 10 to 11 (TF) and histidine 18 each bind ATP. Lysine 42, leucine 74, and arginine 88 together coordinate substrate. ATP is bound by residues 89 to 91 (GLR), glutamate 99, and 124 to 130 (NAFISSS).

This sequence belongs to the bacterial CoaD family. As to quaternary structure, homohexamer. Requires Mg(2+) as cofactor.

It is found in the cytoplasm. It catalyses the reaction (R)-4'-phosphopantetheine + ATP + H(+) = 3'-dephospho-CoA + diphosphate. It participates in cofactor biosynthesis; coenzyme A biosynthesis; CoA from (R)-pantothenate: step 4/5. Its function is as follows. Reversibly transfers an adenylyl group from ATP to 4'-phosphopantetheine, yielding dephospho-CoA (dPCoA) and pyrophosphate. The polypeptide is Phosphopantetheine adenylyltransferase (Campylobacter fetus subsp. fetus (strain 82-40)).